A 357-amino-acid polypeptide reads, in one-letter code: 3-isopropylmalate dehydrogenase (357 aa).

77-90 (GPKWDTLPGEKRPE) contributes to the NAD(+) binding site. Residues Arg97, Arg107, Arg136, and Asp224 each contribute to the substrate site. Residues Asp224, Asp248, and Asp252 each coordinate Mg(2+). Position 282 to 294 (282 to 294 (GSAPDIAGQDLAN)) interacts with NAD(+).

This sequence belongs to the isocitrate and isopropylmalate dehydrogenases family. LeuB type 1 subfamily. In terms of assembly, homodimer. The cofactor is Mg(2+). It depends on Mn(2+) as a cofactor.

It is found in the cytoplasm. It carries out the reaction (2R,3S)-3-isopropylmalate + NAD(+) = 4-methyl-2-oxopentanoate + CO2 + NADH. It participates in amino-acid biosynthesis; L-leucine biosynthesis; L-leucine from 3-methyl-2-oxobutanoate: step 3/4. In terms of biological role, catalyzes the oxidation of 3-carboxy-2-hydroxy-4-methylpentanoate (3-isopropylmalate) to 3-carboxy-4-methyl-2-oxopentanoate. The product decarboxylates to 4-methyl-2 oxopentanoate. The sequence is that of 3-isopropylmalate dehydrogenase from Clostridium acetobutylicum (strain ATCC 824 / DSM 792 / JCM 1419 / IAM 19013 / LMG 5710 / NBRC 13948 / NRRL B-527 / VKM B-1787 / 2291 / W).